The sequence spans 166 residues: Phosphopantetheine adenylyltransferase (166 aa).

T14 is a substrate binding site. Residues 14 to 15 (TF) and H22 each bind ATP. Residues K46, L78, and R92 each contribute to the substrate site. ATP-binding positions include 93 to 95 (GLR), E103, and 128 to 134 (WMYLSSS).

Belongs to the bacterial CoaD family. In terms of assembly, homohexamer. It depends on Mg(2+) as a cofactor.

The protein localises to the cytoplasm. It catalyses the reaction (R)-4'-phosphopantetheine + ATP + H(+) = 3'-dephospho-CoA + diphosphate. Its pathway is cofactor biosynthesis; coenzyme A biosynthesis; CoA from (R)-pantothenate: step 4/5. Reversibly transfers an adenylyl group from ATP to 4'-phosphopantetheine, yielding dephospho-CoA (dPCoA) and pyrophosphate. The protein is Phosphopantetheine adenylyltransferase of Maridesulfovibrio salexigens (strain ATCC 14822 / DSM 2638 / NCIMB 8403 / VKM B-1763) (Desulfovibrio salexigens).